The following is a 116-amino-acid chain: MSNHRIERVGMEIKREVNEILQKKVRDPRVQGVTITDVQMSGDLSLAKVYYTIMSDLASDNQKVQIGLEKAKGTIKRELGKNLTMYKIPDLTFIKDESIEYGNKIDQMLRDLEKRN.

This sequence belongs to the RbfA family. In terms of assembly, monomer. Binds 30S ribosomal subunits, but not 50S ribosomal subunits or 70S ribosomes.

The protein resides in the cytoplasm. In terms of biological role, one of several proteins that assist in the late maturation steps of the functional core of the 30S ribosomal subunit. Associates with free 30S ribosomal subunits (but not with 30S subunits that are part of 70S ribosomes or polysomes). Required for efficient processing of 16S rRNA. May interact with the 5'-terminal helix region of 16S rRNA. The protein is Ribosome-binding factor A of Streptococcus mutans serotype c (strain ATCC 700610 / UA159).